A 271-amino-acid chain; its full sequence is 5-deoxy-glucuronate isomerase (271 aa).

It belongs to the isomerase IolB family.

It catalyses the reaction 5-deoxy-D-glucuronate = 5-dehydro-2-deoxy-D-gluconate. Its pathway is polyol metabolism; myo-inositol degradation into acetyl-CoA; acetyl-CoA from myo-inositol: step 4/7. Involved in the isomerization of 5-deoxy-glucuronate (5DG) to 5-dehydro-2-deoxy-D-gluconate (DKG or 2-deoxy-5-keto-D-gluconate). The protein is 5-deoxy-glucuronate isomerase of Bacillus velezensis (strain DSM 23117 / BGSC 10A6 / LMG 26770 / FZB42) (Bacillus amyloliquefaciens subsp. plantarum).